Reading from the N-terminus, the 141-residue chain is Large ribosomal subunit protein uL16 (141 aa).

This sequence belongs to the universal ribosomal protein uL16 family. As to quaternary structure, part of the 50S ribosomal subunit.

Functionally, binds 23S rRNA and is also seen to make contacts with the A and possibly P site tRNAs. The chain is Large ribosomal subunit protein uL16 from Campylobacter concisus (strain 13826).